Here is a 778-residue protein sequence, read N- to C-terminus: Double zinc ribbon and ankyrin repeat-containing protein 1 (778 aa).

Residues Ser179 and Ser201 each carry the phosphoserine modification. DZANK-type zinc fingers lie at residues 230-289 (CAHC…CVVC) and 359-407 (CSRC…GSCG). ANK repeat units lie at residues 631 to 662 (ENKL…DPNC) and 666 to 695 (QGRP…DIDQ). A Phosphoserine modification is found at Ser768.

Interacts with NINL. Associates with DYNC1H1 and multiple dynein intermediate and light chains as well as actin-binding proteins.

Its subcellular location is the cytoplasm. It localises to the cytoskeleton. The protein resides in the microtubule organizing center. The protein localises to the centrosome. It is found in the cilium basal body. Its function is as follows. Involved in vesicle transport in photoreceptor cells. The polypeptide is Double zinc ribbon and ankyrin repeat-containing protein 1 (Dzank1) (Mus musculus (Mouse)).